A 273-amino-acid chain; its full sequence is Urease accessory protein UreD (273 aa).

The protein belongs to the UreD family. As to quaternary structure, ureD, UreF and UreG form a complex that acts as a GTP-hydrolysis-dependent molecular chaperone, activating the urease apoprotein by helping to assemble the nickel containing metallocenter of UreC. The UreE protein probably delivers the nickel.

The protein localises to the cytoplasm. Its function is as follows. Required for maturation of urease via the functional incorporation of the urease nickel metallocenter. In Mycolicibacterium gilvum (strain PYR-GCK) (Mycobacterium gilvum (strain PYR-GCK)), this protein is Urease accessory protein UreD.